Reading from the N-terminus, the 167-residue chain is MVIAVYPGTFDPFTRGHEDLVRRASNIFDELIVGVAQSPNKRPFFALEERIEIAREVLGHYPNVRVEGFSGLLKDFVRKNGARVIVRGLRAVSDFEYEFQMAGMNRYLLPDVETMFLTPSDQYQFISGTFVREIAVLGGDVSKFVFPSVEKWLKEKTGKTEGSGKSE.

T9 is a substrate binding site. Residues 9–10 (TF) and H17 each bind ATP. 3 residues coordinate substrate: K41, L73, and R87. Residues 88-90 (GLR), E98, and 123-129 (YQFISGT) contribute to the ATP site.

It belongs to the bacterial CoaD family. Homohexamer. Mg(2+) serves as cofactor.

The protein localises to the cytoplasm. It catalyses the reaction (R)-4'-phosphopantetheine + ATP + H(+) = 3'-dephospho-CoA + diphosphate. The protein operates within cofactor biosynthesis; coenzyme A biosynthesis; CoA from (R)-pantothenate: step 4/5. Reversibly transfers an adenylyl group from ATP to 4'-phosphopantetheine, yielding dephospho-CoA (dPCoA) and pyrophosphate. The chain is Phosphopantetheine adenylyltransferase from Ralstonia pickettii (strain 12J).